We begin with the raw amino-acid sequence, 339 residues long: DNA-directed RNA polymerase subunit alpha (339 aa).

Positions 1–233 (MVREEVAGST…DLFLPFLHAE (233 aa)) are alpha N-terminal domain (alpha-NTD). The alpha C-terminal domain (alpha-CTD) stretch occupies residues 264-339 (KKGIPLNCIF…IDLLKNKLSF (76 aa)).

Belongs to the RNA polymerase alpha chain family. In plastids the minimal PEP RNA polymerase catalytic core is composed of four subunits: alpha, beta, beta', and beta''. When a (nuclear-encoded) sigma factor is associated with the core the holoenzyme is formed, which can initiate transcription.

It localises to the plastid. The protein resides in the chloroplast. It carries out the reaction RNA(n) + a ribonucleoside 5'-triphosphate = RNA(n+1) + diphosphate. Its function is as follows. DNA-dependent RNA polymerase catalyzes the transcription of DNA into RNA using the four ribonucleoside triphosphates as substrates. This chain is DNA-directed RNA polymerase subunit alpha, found in Psathyrostachys stoloniformis.